The primary structure comprises 124 residues: Ribonuclease pancreatic (124 aa).

Positions 1 to 13 (KESAAAKFERQHM) are enriched in basic and acidic residues. Residues 1 to 24 (KESAAAKFERQHMDPSMSSASSSN) form a disordered region. Positions 7 and 10 each coordinate substrate. The Proton acceptor role is filled by His12. Disulfide bonds link Cys26–Cys84, Cys40–Cys95, Cys58–Cys110, and Cys65–Cys72. Substrate-binding positions include 41-45 (KPVNT), Lys66, and Arg85. Residue His119 is the Proton donor of the active site.

This sequence belongs to the pancreatic ribonuclease family. In terms of assembly, monomer. Interacts with and forms tight 1:1 complexes with RNH1. Dimerization of two such complexes may occur. Interaction with RNH1 inhibits this protein. Pancreas.

It localises to the secreted. It catalyses the reaction an [RNA] containing cytidine + H2O = an [RNA]-3'-cytidine-3'-phosphate + a 5'-hydroxy-ribonucleotide-3'-[RNA].. It carries out the reaction an [RNA] containing uridine + H2O = an [RNA]-3'-uridine-3'-phosphate + a 5'-hydroxy-ribonucleotide-3'-[RNA].. Endonuclease that catalyzes the cleavage of RNA on the 3' side of pyrimidine nucleotides. Acts on single-stranded and double-stranded RNA. In Dama dama (Fallow deer), this protein is Ribonuclease pancreatic (RNASE1).